The primary structure comprises 495 residues: Nitrogen fixation regulatory protein (495 aa).

The PAS 1 domain maps to 23-93 (HPGLFFTMVE…QEMWQTLLQR (71 aa)). The 55-residue stretch at 94 to 148 (QPWRGQLINQARDGGLYLVDIDITPVLNPQGELEHYLAMQRDISVSYTLEQRLRN) folds into the PAC domain. The PAS 2; truncated domain maps to 151–174 (TLMEAVLNNIPAAVVVVDEQDRVV).

It depends on FAD as a cofactor.

Required for the inhibition of NifA activity in response to oxygen and low level of fixed nitrogen. The protein is Nitrogen fixation regulatory protein (nifL) of Klebsiella pneumoniae.